The sequence spans 1028 residues: U2 snRNP-associated SURP motif-containing protein (1028 aa).

2 disordered regions span residues 1–111 and 141–272; these read MADK…EDEK and VNAA…DPST. Position 2 is an N-acetylalanine (alanine 2). Residues 7 to 16 are compositionally biased toward polar residues; that stretch reads GGSQKASSKT. Over residues 45–54 the composition is skewed to basic residues; it reads TRPKSPRKHN. The span at 55–64 shows a compositional bias: basic and acidic residues; it reads YRNESARESL. Phosphoserine is present on serine 67. A Glycyl lysine isopeptide (Lys-Gly) (interchain with G-Cter in SUMO2) cross-link involves residue lysine 80. A coiled-coil region spans residues 92 to 121; that stretch reads AKRTLSKKEQEELKKKEDEKAAAEIYEEFL. 2 stretches are compositionally biased toward basic and acidic residues: residues 97–111 and 144–155; these read SKKE…EDEK and AKEEHETDEKRG. Residues lysine 145 and lysine 168 each participate in a glycyl lysine isopeptide (Lys-Gly) (interchain with G-Cter in SUMO2) cross-link. A compositionally biased stretch (polar residues) spans 169-178; it reads NPPNQSSNER. Residues 186–222 are compositionally biased toward basic and acidic residues; that stretch reads ETKKPPLKKGEKEKKKSNLELFKEELKQIQEERDERH. The stretch at 192 to 232 forms a coiled coil; it reads LKKGEKEKKKSNLELFKEELKQIQEERDERHKTKGRLSRFE. Position 202 is a phosphoserine (serine 202). A Glycyl lysine isopeptide (Lys-Gly) (interchain with G-Cter in SUMO2) cross-link involves residue lysine 208. Residue serine 236 is modified to Phosphoserine. A compositionally biased stretch (basic and acidic residues) spans 239–249; it reads DGQRRSMDAPS. In terms of domain architecture, RRM spans 273 to 354; sequence TNLYLGNINP…FEMKLGWGKA (82 aa). The stretch at 429–472 is one SURP motif repeat; it reads LIHRMIEFVVREGPMFEAMIMNREINNPMFRFLFENQTPAHVYY. Serine 484 carries the post-translational modification Phosphoserine. A CID domain is found at 533 to 678; that stretch reads LKEEQRDKLE…KLQNIFLGLV (146 aa). The residue at position 718 (threonine 718) is a Phosphothreonine. Glycyl lysine isopeptide (Lys-Gly) (interchain with G-Cter in SUMO2) cross-links involve residues lysine 747 and lysine 748. Lysine 759 is subject to N6-acetyllysine; alternate. Lysine 759 is covalently cross-linked (Glycyl lysine isopeptide (Lys-Gly) (interchain with G-Cter in SUMO2); alternate). 2 disordered regions span residues 777-840 and 854-1028; these read KWEL…EEKR and QDEL…KNKH. Residues 779-809 adopt a coiled-coil conformation; the sequence is ELFDQHEESEEEENQNQEEESEDEEDTQSSK. The segment covering 785-805 has biased composition (acidic residues); sequence EESEEEENQNQEEESEDEEDT. Phosphoserine is present on residues serine 787, serine 799, and serine 810. Basic and acidic residues-rich tracts occupy residues 809 to 840 and 873 to 921; these read KSEE…EEKR and QVEH…TPTR. Residues lysine 821, lysine 828, and lysine 831 each participate in a glycyl lysine isopeptide (Lys-Gly) (interchain with G-Cter in SUMO2) cross-link. Residues 836–914 adopt a coiled-coil conformation; it reads SEEKRAKLRE…ESRSKDEKEK (79 aa). Residue threonine 930 is modified to Phosphothreonine. A phosphoserine mark is found at serine 945 and serine 947. Basic and acidic residues predominate over residues 949-979; that stretch reads KSERSERSERSHKESSRSRSSHKDSPRDVSK. Basic residues predominate over residues 990–1028; the sequence is TPKRSRRSRSRSPKKSGKKSRSQSRSPHRSHKKSKKNKH.

It belongs to the splicing factor SR family. As to quaternary structure, interacts with ERBB4.

Its subcellular location is the nucleus. This Pongo abelii (Sumatran orangutan) protein is U2 snRNP-associated SURP motif-containing protein (U2SURP).